Reading from the N-terminus, the 318-residue chain is Probable cell division protein WhiA (318 aa).

Positions 281–314 form a DNA-binding region, H-T-H motif; it reads SLKELGQMLVPPVGKSGVNHRLRKIEEISKKLKE.

This sequence belongs to the WhiA family.

Its function is as follows. Involved in cell division and chromosome segregation. This is Probable cell division protein WhiA from Thermoanaerobacter pseudethanolicus (strain ATCC 33223 / 39E) (Clostridium thermohydrosulfuricum).